The primary structure comprises 84 residues: Putative membrane protein insertion efficiency factor (84 aa).

This sequence belongs to the UPF0161 family.

The protein localises to the cell inner membrane. In terms of biological role, could be involved in insertion of integral membrane proteins into the membrane. This is Putative membrane protein insertion efficiency factor from Shewanella frigidimarina (strain NCIMB 400).